We begin with the raw amino-acid sequence, 450 residues long: UDP-N-acetylmuramoylalanine--D-glutamate ligase (450 aa).

119-125 serves as a coordination point for ATP; the sequence is GSNGKTT.

The protein belongs to the MurCDEF family.

The protein resides in the cytoplasm. The catalysed reaction is UDP-N-acetyl-alpha-D-muramoyl-L-alanine + D-glutamate + ATP = UDP-N-acetyl-alpha-D-muramoyl-L-alanyl-D-glutamate + ADP + phosphate + H(+). It functions in the pathway cell wall biogenesis; peptidoglycan biosynthesis. Cell wall formation. Catalyzes the addition of glutamate to the nucleotide precursor UDP-N-acetylmuramoyl-L-alanine (UMA). This is UDP-N-acetylmuramoylalanine--D-glutamate ligase from Streptococcus sanguinis (strain SK36).